The chain runs to 226 residues: Fibronectin type III domain-containing protein 10 (226 aa).

The signal sequence occupies residues 1–20 (MRAPPLLLLLAACAPPPCAA). Over 21 to 182 (AAPTPPGWEP…FTAEPAGMQD (162 aa)) the chain is Extracellular. Positions 74-166 (PAGRSLRASV…PAAAAPETPE (93 aa)) constitute a Fibronectin type-III domain. Residues N86 and N109 are each glycosylated (N-linked (GlcNAc...) asparagine). Residues 183–203 (IVVAMTAVGGSICVMLVVICL) form a helical membrane-spanning segment. Residues 204–226 (LVAYITENLMRPALARPGLRRHP) lie on the Cytoplasmic side of the membrane.

The protein localises to the membrane. The sequence is that of Fibronectin type III domain-containing protein 10 (FNDC10) from Homo sapiens (Human).